The chain runs to 919 residues: Periodic tryptophan protein 2 homolog (919 aa).

5 WD repeats span residues 12–50 (GTVYRCGNLNFTHDGNSVISPVGNRVTVFDLKNNRSNTL), 53–93 (ATKY…LHHF), 94–132 (HFKGSVHSVSFSPDGRKFVVTKGNIAQMYHAPGKKREFN), 142–181 (GPYDETTCIDWTDDSKCFVVGSKDMSTWVFGAERWDNLIY), and 186–225 (GHKDAIVACFFESNSLDLYSLSQDGALCVWQCDTPPEGLR). N6-acetyllysine is present on K55. The tract at residues 238 to 266 (QREKEEEEEDEEEGDRETTIRGKTTPAEQ) is disordered. The segment covering 242-252 (EEEEEDEEEGD) has biased composition (acidic residues). WD repeat units follow at residues 286–325 (GDFNNLTSAAYHKKTHLLVTGFASGIFHLHELPEFNLIHS), 328–368 (ISDQ…YVLK), 371–410 (GHFNSMVALAYSPDGQYIVTGGDDGKVKVWNTLSGFCFVT), 413–452 (EHSSGVTGVTFTTTGHVIVTSSLDGTVRAFDLHRYRNFRT), 456–498 (PRPT…DVLS), 499–538 (GHEGPVSGLCFNPMKSILASASWDKTVRLWDMFDSWRTKE), 541–580 (TLTSDALAVTFRPDGAELAVATLNSQITFWDPENAVQVGS), 603–642 (AKGKAFTTLCYSADGQSILAGGMSKFVCLYHVREQILVKR), and 700–740 (KPEI…DPFE). The disordered stretch occupies residues 885-919 (TLEPVDTEEDSDASDEDSLHLLRAAGEEEEEEMLI). A compositionally biased stretch (acidic residues) spans 889 to 900 (VDTEEDSDASDE). The residue at position 891 (T891) is a Phosphothreonine. Residues S895, S898, and S902 each carry the phosphoserine modification.

Belongs to the WD repeat PWP2 family. As to quaternary structure, part of the small subunit (SSU) processome, composed of more than 70 proteins and the RNA chaperone small nucleolar RNA (snoRNA) U3.

Its subcellular location is the nucleus. The protein localises to the nucleolus. In terms of biological role, part of the small subunit (SSU) processome, first precursor of the small eukaryotic ribosomal subunit. During the assembly of the SSU processome in the nucleolus, many ribosome biogenesis factors, an RNA chaperone and ribosomal proteins associate with the nascent pre-rRNA and work in concert to generate RNA folding, modifications, rearrangements and cleavage as well as targeted degradation of pre-ribosomal RNA by the RNA exosome. This is Periodic tryptophan protein 2 homolog (Pwp2) from Mus musculus (Mouse).